The chain runs to 298 residues: Protoheme IX farnesyltransferase (298 aa).

A run of 9 helical transmembrane segments spans residues 16–36 (VVAL…PDMP), 45–65 (ALGF…NQLL), 93–113 (VFAG…VNVI), 114–134 (TAVL…VYLK), 141–161 (IVIG…AVTG), 172–192 (SLLV…LAIF), 223–243 (VLLA…VFYL), 244–264 (GGAV…LNPP), and 277–297 (IVYL…LPWV).

This sequence belongs to the UbiA prenyltransferase family. Protoheme IX farnesyltransferase subfamily.

The protein localises to the cell inner membrane. It catalyses the reaction heme b + (2E,6E)-farnesyl diphosphate + H2O = Fe(II)-heme o + diphosphate. It functions in the pathway porphyrin-containing compound metabolism; heme O biosynthesis; heme O from protoheme: step 1/1. Converts heme B (protoheme IX) to heme O by substitution of the vinyl group on carbon 2 of heme B porphyrin ring with a hydroxyethyl farnesyl side group. The polypeptide is Protoheme IX farnesyltransferase (Xanthomonas oryzae pv. oryzae (strain MAFF 311018)).